Here is a 261-residue protein sequence, read N- to C-terminus: Methyltransferase nsrG (261 aa).

Residues 49–141 (DVGAGNGPYA…AHQLRPGALF (93 aa)) form a methyltransferase domain region.

Belongs to the methyltransferase superfamily.

It participates in secondary metabolite biosynthesis. Its function is as follows. Methyltransferase; part of the gene cluster that mediates the biosynthesis of the tetrahydroxanthone dimer neosartorin, which exhibits antibacterial activity. The two different monomeric units appear to be synthesized by the same set of enzymes, among which the Baeyer-Villiger monooxygenase nsrF is the key enzyme for the divergence of the biosynthetic routes. The pathway begins with the synthesis of atrochrysone thioester by the polyketide synthase nsrB. The atrochrysone carboxyl ACP thioesterase nsrC then breaks the thioester bond and releases the atrochrysone carboxylic acid from AacuL. Atrochrysone carboxylic acid is decarboxylated by the decarboxylase nsrE, and oxidized by the anthrone oxygenase nsrD to yield emodin. Emodin is then reduced to emodin hydroquinone by the oxidoreductase nsrR. A-ring reduction by the short chain dehydrogenase nsrJ, dehydration by the scytalone dehydratase-like protein nsrI and probable spontaneous re-oxidation, results in overall deoxygenation to chrysophanol. The Baeyer-Villiger monooxygenase nsrF accepts chrysophanol as a substrate to insert one oxygen atom at two different positions to yield the precursors of both monomric units. NsrF is promiscuous/flexible in interacting with the 2 (non methylated and methylated) aromatic rings of chrysophanol, thus diverging the biosynthetic pathway at this point. After the hydrolysis of the lactones, methylesterification by the methyltransferase nsrG yields respectively moniliphenone and 2,2',6'-trihydroxy-4-methyl-6-methoxya-cyldiphenylmethanone. The next steps are the hydroxylation by the FAD-dependent monooxygenase nsrK, followed by isomerization by the monooxygenase nsrQ. The short chain dehydrogenase/reductase nsrO then catalyzes the C-5 ketoreduction to give the xanthone skeleton of blennolide C and 5-acetylblennolide A. The acetyltransferase nsrL has a strict substrate specificity and uses only blennolide A but not blennolide C to yield 5-acetylblennolide A as the single-acetylated product. In the final step of the biosynthesis, the heterodimerization of the 2 xanthones, blennolide C and 5-acetylblennolide A, is catalyzed by the cytochrome P450 monooxygenase nsrP. NsrP can utilize at least three different xanthones as its substrates to perform the dimerization reaction. In Aspergillus novofumigatus (strain IBT 16806), this protein is Methyltransferase nsrG.